Here is a 206-residue protein sequence, read N- to C-terminus: Protein-methionine-sulfoxide reductase heme-binding subunit MsrQ (206 aa).

6 consecutive transmembrane segments (helical) span residues 7-27 (IIIH…LLSG), 43-63 (FLGF…KVFY), 77-97 (LGLW…ALEL), 112-132 (GYLI…LSSW), 142-162 (WWFY…IHYV), and 172-192 (SMLY…GLFI).

The protein belongs to the MsrQ family. In terms of assembly, heterodimer of a catalytic subunit (MsrP) and a heme-binding subunit (MsrQ). FMN is required as a cofactor. It depends on heme b as a cofactor.

It is found in the cell inner membrane. In terms of biological role, part of the MsrPQ system that repairs oxidized periplasmic proteins containing methionine sulfoxide residues (Met-O), using respiratory chain electrons. Thus protects these proteins from oxidative-stress damage caused by reactive species of oxygen and chlorine generated by the host defense mechanisms. MsrPQ is essential for the maintenance of envelope integrity under bleach stress, rescuing a wide series of structurally unrelated periplasmic proteins from methionine oxidation. MsrQ provides electrons for reduction to the reductase catalytic subunit MsrP, using the quinone pool of the respiratory chain. This chain is Protein-methionine-sulfoxide reductase heme-binding subunit MsrQ, found in Pasteurella multocida (strain Pm70).